A 290-amino-acid polypeptide reads, in one-letter code: Sporulation-specific protease YabG (290 aa).

It belongs to the peptidase U57 family.

Its subcellular location is the forespore outer membrane. Cleaves the spore coat proteins SpoIVA and SafA. May cooperate with tgl to mediate the temperature-dependent cross-linking of coat proteins like GerQ. This is Sporulation-specific protease YabG (yabG) from Bacillus subtilis (strain 168).